Consider the following 771-residue polypeptide: Probable exo-1,4-beta-xylosidase bxlB (771 aa).

An N-terminal signal peptide occupies residues 1-25; it reads MVGLTPQHYGNAIALMTYLASTALA. N-linked (GlcNAc...) asparagine glycosylation occurs at Asn67. Asp293 is a catalytic residue. Asn305, Asn345, Asn423, Asn462, and Asn463 each carry an N-linked (GlcNAc...) asparagine glycan.

It belongs to the glycosyl hydrolase 3 family.

Its subcellular location is the secreted. The catalysed reaction is Hydrolysis of (1-&gt;4)-beta-D-xylans, to remove successive D-xylose residues from the non-reducing termini.. The protein operates within glycan degradation; xylan degradation. Xylan 1,4-beta-xylosidase involved in the hydrolysis of xylan, a major structural heterogeneous polysaccharide found in plant biomass representing the second most abundant polysaccharide in the biosphere, after cellulose. This is Probable exo-1,4-beta-xylosidase bxlB (bxlB) from Aspergillus clavatus (strain ATCC 1007 / CBS 513.65 / DSM 816 / NCTC 3887 / NRRL 1 / QM 1276 / 107).